A 130-amino-acid chain; its full sequence is L-aspartate semialdehyde sulfurtransferase iron-sulfur subunit (130 aa).

2 consecutive 4Fe-4S ferredoxin-type domains span residues 72–101 and 102–130; these read RPIHRDEEECVECGACISVCPMNVYSFDET and WSLCVDEKKCIQCGMCIKMCPHGALKLGE. [4Fe-4S] cluster-binding residues include cysteine 81, cysteine 84, cysteine 87, cysteine 91, cysteine 111, cysteine 114, cysteine 117, and cysteine 121.

May form a complex with MA_1821. The cofactor is [4Fe-4S] cluster.

It functions in the pathway amino-acid biosynthesis. In terms of biological role, required for O-acetylhomoserine sulfhydrylase (OAHS)-independent homocysteine (Hcy) biosynthesis. Together with MA_1821, catalyzes the condensation of sulfide with aspartate semialdehyde to generate homocysteine. May be involved in the reduction of the disulfide formed in MA_1821. This is L-aspartate semialdehyde sulfurtransferase iron-sulfur subunit from Methanosarcina acetivorans (strain ATCC 35395 / DSM 2834 / JCM 12185 / C2A).